The following is a 180-amino-acid chain: Large ribosomal subunit protein uL5 (180 aa).

The protein belongs to the universal ribosomal protein uL5 family. Part of the 50S ribosomal subunit; part of the 5S rRNA/L5/L18/L25 subcomplex. Contacts the 5S rRNA and the P site tRNA. Forms a bridge to the 30S subunit in the 70S ribosome.

Its function is as follows. This is one of the proteins that bind and probably mediate the attachment of the 5S RNA into the large ribosomal subunit, where it forms part of the central protuberance. In the 70S ribosome it contacts protein S13 of the 30S subunit (bridge B1b), connecting the 2 subunits; this bridge is implicated in subunit movement. Contacts the P site tRNA; the 5S rRNA and some of its associated proteins might help stabilize positioning of ribosome-bound tRNAs. The protein is Large ribosomal subunit protein uL5 of Streptococcus suis (strain 05ZYH33).